The primary structure comprises 558 residues: Membrane protein insertase YidC (558 aa).

The next 6 helical transmembrane spans lie at Val-6–Pro-26, Leu-326–Phe-348, Gly-355–Phe-377, Leu-424–Ile-444, Val-469–Ile-489, and Ile-512–Val-532.

This sequence belongs to the OXA1/ALB3/YidC family. Type 1 subfamily. As to quaternary structure, interacts with the Sec translocase complex via SecD. Specifically interacts with transmembrane segments of nascent integral membrane proteins during membrane integration.

Its subcellular location is the cell inner membrane. Its function is as follows. Required for the insertion and/or proper folding and/or complex formation of integral membrane proteins into the membrane. Involved in integration of membrane proteins that insert both dependently and independently of the Sec translocase complex, as well as at least some lipoproteins. Aids folding of multispanning membrane proteins. The sequence is that of Membrane protein insertase YidC from Pelagibacter ubique (strain HTCC1062).